The primary structure comprises 341 residues: Protein-glutamate methylesterase/protein-glutamine glutaminase 2 (341 aa).

In terms of domain architecture, Response regulatory spans 7–120; the sequence is KTLIVDDSLL…NRDLDSFFSE (114 aa). A 4-aspartylphosphate modification is found at Asp58. Positions 155–341 constitute a CheB-type methylesterase domain; it reads VIAIGASTGG…QALYKLINQL (187 aa). Active-site residues include Ser161, His187, and Asp283.

The protein belongs to the CheB family. Phosphorylated by CheA. Phosphorylation of the N-terminal regulatory domain activates the methylesterase activity.

The protein localises to the cytoplasm. The catalysed reaction is [protein]-L-glutamate 5-O-methyl ester + H2O = L-glutamyl-[protein] + methanol + H(+). It catalyses the reaction L-glutaminyl-[protein] + H2O = L-glutamyl-[protein] + NH4(+). Functionally, involved in chemotaxis. Part of a chemotaxis signal transduction system that modulates chemotaxis in response to various stimuli. Catalyzes the demethylation of specific methylglutamate residues introduced into the chemoreceptors (methyl-accepting chemotaxis proteins or MCP) by CheR. Also mediates the irreversible deamidation of specific glutamine residues to glutamic acid. The chain is Protein-glutamate methylesterase/protein-glutamine glutaminase 2 from Syntrophomonas wolfei subsp. wolfei (strain DSM 2245B / Goettingen).